Here is a 356-residue protein sequence, read N- to C-terminus: 1-acyl-sn-glycerol-3-phosphate acyltransferase LPAT1, chloroplastic (356 aa).

Residues 1–56 constitute a chloroplast transit peptide; the sequence is MDVASARSISSHPSYYGKPICSSQSSLIRISRDKVCCFGRISNGMTSFTTSLHAVP. Residues 127-147 traverse the membrane as a helical segment; sequence GIFFCVVAGISATFLIVLMII. The HXXXXD motif motif lies at 202 to 207; sequence HQSFLD. Residues 224 to 244 traverse the membrane as a helical segment; it reads TGIFVIPIIGWAMSMMGVVPL.

It belongs to the 1-acyl-sn-glycerol-3-phosphate acyltransferase family. Widely expressed. Expressed at higher level in leaves. Expressed at lower level in silique walls compared to leaves.

The protein localises to the plastid. It is found in the chloroplast membrane. It catalyses the reaction a fatty acyl-[ACP] + a 1-acyl-sn-glycero-3-phosphate = a 1,2-diacyl-sn-glycero-3-phosphate + holo-[ACP]. The catalysed reaction is a 1-acyl-sn-glycero-3-phosphate + an acyl-CoA = a 1,2-diacyl-sn-glycero-3-phosphate + CoA. Its pathway is phospholipid metabolism; CDP-diacylglycerol biosynthesis; CDP-diacylglycerol from sn-glycerol 3-phosphate: step 2/3. Its function is as follows. Plastidial enzyme of the prokaryotic glycerol-3-phosphate pathway that converts lysophosphatidic acid (LPA) into phosphatidic acid by incorporating an acyl moiety at position sn-2. Utilizes palmitoyl-ACP (16:0-ACP) to produce phosphatidic acid containing a saturated group at position sn-2, which is characteristic of lipids synthesized by the prokaryotic pathway. In vitro, can use 16:0-CoA as acyl donor. Essential for embryo development during the transition from the globular to the heart stage when chloroplasts begin to form. This is 1-acyl-sn-glycerol-3-phosphate acyltransferase LPAT1, chloroplastic from Arabidopsis thaliana (Mouse-ear cress).